The chain runs to 480 residues: Aspartyl/glutamyl-tRNA(Asn/Gln) amidotransferase subunit B (480 aa).

This sequence belongs to the GatB/GatE family. GatB subfamily. In terms of assembly, heterotrimer of A, B and C subunits.

The catalysed reaction is L-glutamyl-tRNA(Gln) + L-glutamine + ATP + H2O = L-glutaminyl-tRNA(Gln) + L-glutamate + ADP + phosphate + H(+). It catalyses the reaction L-aspartyl-tRNA(Asn) + L-glutamine + ATP + H2O = L-asparaginyl-tRNA(Asn) + L-glutamate + ADP + phosphate + 2 H(+). Functionally, allows the formation of correctly charged Asn-tRNA(Asn) or Gln-tRNA(Gln) through the transamidation of misacylated Asp-tRNA(Asn) or Glu-tRNA(Gln) in organisms which lack either or both of asparaginyl-tRNA or glutaminyl-tRNA synthetases. The reaction takes place in the presence of glutamine and ATP through an activated phospho-Asp-tRNA(Asn) or phospho-Glu-tRNA(Gln). The polypeptide is Aspartyl/glutamyl-tRNA(Asn/Gln) amidotransferase subunit B (Streptococcus pneumoniae (strain 70585)).